A 61-amino-acid chain; its full sequence is Small ribosomal subunit protein uS14 (61 aa).

Zn(2+)-binding residues include Cys24, Cys27, Cys40, and Cys43.

The protein belongs to the universal ribosomal protein uS14 family. Zinc-binding uS14 subfamily. As to quaternary structure, part of the 30S ribosomal subunit. Contacts proteins S3 and S10. It depends on Zn(2+) as a cofactor.

Functionally, binds 16S rRNA, required for the assembly of 30S particles and may also be responsible for determining the conformation of the 16S rRNA at the A site. The polypeptide is Small ribosomal subunit protein uS14 (Thermosipho africanus (strain TCF52B)).